A 498-amino-acid polypeptide reads, in one-letter code: Protein YhjJ (498 aa).

Residues 1–24 form the signal peptide; it reads MQGTKIRLLAGGLLMMATAGYVQA.

The protein belongs to the peptidase M16 family.

It is found in the periplasm. This chain is Protein YhjJ (yhjJ), found in Escherichia coli (strain K12).